Here is a 413-residue protein sequence, read N- to C-terminus: NADPH dehydrogenase afvA (413 aa).

53 to 56 is an FMN binding site; that stretch reads APLC. Tyrosine 58 serves as a coordination point for substrate. Residues alanine 88 and glutamine 130 each coordinate FMN. 211 to 214 is a substrate binding site; it reads HAAH. FMN-binding positions include arginine 264 and 370–371; that span reads GR.

Belongs to the NADH:flavin oxidoreductase/NADH oxidase family. NamA subfamily. Requires FMN as cofactor.

It carries out the reaction A + NADPH + H(+) = AH2 + NADP(+). The protein operates within secondary metabolite biosynthesis. Functionally, NADPH dehydrogenase; part of the gene cluster that mediates the biosynthesis of aflavarin, a bicoumarin that exhibits anti-insectan activity against the fungivorous beetle C.hemipterus. The chain is NADPH dehydrogenase afvA from Aspergillus flavus (strain ATCC 200026 / FGSC A1120 / IAM 13836 / NRRL 3357 / JCM 12722 / SRRC 167).